A 369-amino-acid polypeptide reads, in one-letter code: UDP-N-acetylglucosamine--N-acetylmuramyl-(pentapeptide) pyrophosphoryl-undecaprenol N-acetylglucosamine transferase (369 aa).

Residues 10–12 (TAG), N124, R166, S196, I251, and Q296 contribute to the UDP-N-acetyl-alpha-D-glucosamine site.

It belongs to the glycosyltransferase 28 family. MurG subfamily.

The protein resides in the cell membrane. It carries out the reaction di-trans,octa-cis-undecaprenyl diphospho-N-acetyl-alpha-D-muramoyl-L-alanyl-D-glutamyl-meso-2,6-diaminopimeloyl-D-alanyl-D-alanine + UDP-N-acetyl-alpha-D-glucosamine = di-trans,octa-cis-undecaprenyl diphospho-[N-acetyl-alpha-D-glucosaminyl-(1-&gt;4)]-N-acetyl-alpha-D-muramoyl-L-alanyl-D-glutamyl-meso-2,6-diaminopimeloyl-D-alanyl-D-alanine + UDP + H(+). Its pathway is cell wall biogenesis; peptidoglycan biosynthesis. In terms of biological role, cell wall formation. Catalyzes the transfer of a GlcNAc subunit on undecaprenyl-pyrophosphoryl-MurNAc-pentapeptide (lipid intermediate I) to form undecaprenyl-pyrophosphoryl-MurNAc-(pentapeptide)GlcNAc (lipid intermediate II). This chain is UDP-N-acetylglucosamine--N-acetylmuramyl-(pentapeptide) pyrophosphoryl-undecaprenol N-acetylglucosamine transferase, found in Acetivibrio thermocellus (strain ATCC 27405 / DSM 1237 / JCM 9322 / NBRC 103400 / NCIMB 10682 / NRRL B-4536 / VPI 7372) (Clostridium thermocellum).